The chain runs to 549 residues: Probable protein kinase UbiB (549 aa).

The 379-residue stretch at 123–501 (DFNEIPLASA…QQQAHKSNYL (379 aa)) folds into the Protein kinase domain. ATP-binding positions include 129–137 (LASASISQV) and K152. The active-site Proton acceptor is D287. 2 helical membrane passes run 496–516 (HKSNYLLITSAVLLICGTLLI) and 520–540 (ATLWTPYVCLVSGIILWFVGW).

This sequence belongs to the ABC1 family. UbiB subfamily.

The protein localises to the cell inner membrane. Its pathway is cofactor biosynthesis; ubiquinone biosynthesis [regulation]. Is probably a protein kinase regulator of UbiI activity which is involved in aerobic coenzyme Q (ubiquinone) biosynthesis. This is Probable protein kinase UbiB from Shewanella baltica (strain OS223).